The following is a 325-amino-acid chain: Ribosomal RNA small subunit methyltransferase C (325 aa).

The protein belongs to the methyltransferase superfamily. RsmC family. In terms of assembly, monomer.

Its subcellular location is the cytoplasm. It carries out the reaction guanosine(1207) in 16S rRNA + S-adenosyl-L-methionine = N(2)-methylguanosine(1207) in 16S rRNA + S-adenosyl-L-homocysteine + H(+). Specifically methylates the guanine in position 1207 of 16S rRNA in the 30S particle. This is Ribosomal RNA small subunit methyltransferase C from Alcanivorax borkumensis (strain ATCC 700651 / DSM 11573 / NCIMB 13689 / SK2).